The primary structure comprises 391 residues: Transmembrane protein 79 (391 aa).

Positions 1–114 are disordered; the sequence is MTEPETLALL…TKSEEPFKED (114 aa). Topologically, residues 1 to 200 are cytoplasmic; it reads MTEPETLALL…GREALRAVAS (200 aa). Over residues 103–114 the composition is skewed to basic and acidic residues; it reads APTKSEEPFKED. A helical membrane pass occupies residues 201 to 221; sequence VVAALIFFPCLLYGAYAFLPF. Topologically, residues 222–240 are extracellular; that stretch reads DAPRLPTMSSRLVYTLRCG. Residues 241 to 261 traverse the membrane as a helical segment; sequence VFATFPIVLGLLVYGLSLLCF. Residues 262-279 lie on the Cytoplasmic side of the membrane; the sequence is SALRPFGEPRREVEIHRQ. A helical membrane pass occupies residues 280–300; it reads YVAQSVQLFILYFFNLAVLST. The Extracellular portion of the chain corresponds to 301-309; it reads YLPQDTLKL. The helical transmembrane segment at 310-330 threads the bilayer; sequence LPLLTGLFAISRLIYWLTFAV. At 331–339 the chain is on the cytoplasmic side; sequence GRSFRGFGY. Residues 340–360 form a helical membrane-spanning segment; sequence GLTFLPLLAMLVWNLYYMFVV. The Extracellular segment spans residues 361–391; the sequence is EPERMLTASESRLDYPDHARSVSDYRPRSWG.

In terms of tissue distribution, expressed in the epidermis of the skin. Expressed in epithelial cells of the outermost layer of the stratum granulosum (SG) and in hair follicles (at protein level).

It localises to the lysosome. Its subcellular location is the golgi apparatus. The protein localises to the trans-Golgi network. It is found in the membrane. Its function is as follows. Contributes to the epidermal integrity and skin barrier function. Plays a role in the lamellar granule (LG) secretory system and in the stratum corneum (SC) epithelial cell formation. The protein is Transmembrane protein 79 (Tmem79) of Mus musculus (Mouse).